The primary structure comprises 1607 residues: Laminin subunit gamma-1 (1607 aa).

The N-terminal stretch at Met1 to Ala33 is a signal peptide. Residues Arg44–Arg283 form the Laminin N-terminal domain. N-linked (GlcNAc...) asparagine glycans are attached at residues Asn58 and Asn132. Cystine bridges form between Cys284–Cys293, Cys286–Cys303, Cys305–Cys314, Cys340–Cys349, Cys342–Cys365, Cys368–Cys377, Cys380–Cys393, Cys396–Cys408, Cys398–Cys414, Cys416–Cys425, Cys428–Cys440, Cys443–Cys454, Cys445–Cys461, Cys463–Cys472, and Cys475–Cys490. Laminin EGF-like domains lie at Cys284–Pro339, Cys340–Pro395, Cys396–Pro442, and Cys443–Pro492. The Laminin EGF-like 5; first part domain occupies Cys493–Cys502. A Laminin IV type A domain is found at Asp512 to Ser687. Asn574 and Asn648 each carry an N-linked (GlcNAc...) asparagine glycan. The Laminin EGF-like 5; second part domain occupies Cys688–Leu721. 24 disulfide bridges follow: Cys722-Cys731, Cys724-Cys738, Cys740-Cys749, Cys752-Cys768, Cys771-Cys779, Cys773-Cys790, Cys793-Cys802, Cys805-Cys823, Cys826-Cys840, Cys828-Cys847, Cys850-Cys859, Cys862-Cys879, Cys882-Cys896, Cys884-Cys903, Cys905-Cys914, Cys917-Cys930, Cys933-Cys945, Cys935-Cys952, Cys954-Cys963, Cys966-Cys978, Cys981-Cys993, Cys983-Cys999, Cys1001-Cys1010, and Cys1013-Cys1026. Laminin EGF-like domains follow at residues Cys722 to Pro770 and Cys771 to Pro825. Positions Cys826–Ala881 constitute a Laminin EGF-like 8; nidogen-binding domain. Laminin EGF-like domains lie at Cys882–Arg932, Cys933–Pro980, and Cys981–Glu1028. N-linked (GlcNAc...) asparagine glycans are attached at residues Asn1020 and Asn1105. A domain II and I region spans residues Cys1029–Pro1607. A coiled-coil region spans residues Arg1034 to Leu1594. Ser1147 carries the phosphoserine modification. Asn1159, Asn1173, Asn1203, Asn1221, Asn1239, Asn1378, Asn1393, and Asn1437 each carry an N-linked (GlcNAc...) asparagine glycan. Ser1491 carries the post-translational modification Phosphoserine.

Laminin is a complex glycoprotein, consisting of three different polypeptide chains (alpha, beta, gamma), which are bound to each other by disulfide bonds into a cross-shaped molecule comprising one long and three short arms with globules at each end. Gamma-1 is a subunit of laminin-1 (laminin-111 or EHS laminin), laminin-2 (laminin-211 or merosin), laminin-3 (laminin-121 or S-laminin), laminin-4 (laminin-221 or S-merosin), laminin-6 (laminin-311 or K-laminin), laminin-7 (laminin-321 or KS-laminin), laminin-8 (laminin-411), laminin-9 (laminin-421), laminin-10 (laminin-511) and laminin-11 (laminin-521). Interacts with SVEP1. In terms of tissue distribution, found in the basement membranes (major component).

It is found in the secreted. The protein resides in the extracellular space. Its subcellular location is the extracellular matrix. The protein localises to the basement membrane. Its function is as follows. Binding to cells via a high affinity receptor, laminin is thought to mediate the attachment, migration and organization of cells into tissues during embryonic development by interacting with other extracellular matrix components. The polypeptide is Laminin subunit gamma-1 (Lamc1) (Mus musculus (Mouse)).